Reading from the N-terminus, the 31-residue chain is Cycloviolacin-O19 (31 aa).

The segment at residues 1–31 (GTLPCGESCVWIPCISSVVGCSCKSKVCYKD) is a cross-link (cyclopeptide (Gly-Asp)). Cystine bridges form between Cys-5–Cys-21, Cys-9–Cys-23, and Cys-14–Cys-28.

Post-translationally, this is a cyclic peptide. As to expression, expressed in petioles and runners but not in leaves, petals and roots (at protein level).

Probably participates in a plant defense mechanism. In Viola odorata (Sweet violet), this protein is Cycloviolacin-O19.